A 122-amino-acid polypeptide reads, in one-letter code: Putative iron-sulfur cluster insertion protein ErpA (122 aa).

Residues C50, C114, and C116 each contribute to the iron-sulfur cluster site.

The protein belongs to the HesB/IscA family. Homodimer. It depends on iron-sulfur cluster as a cofactor.

Its function is as follows. Required for insertion of 4Fe-4S clusters. The sequence is that of Putative iron-sulfur cluster insertion protein ErpA from Bordetella petrii (strain ATCC BAA-461 / DSM 12804 / CCUG 43448).